We begin with the raw amino-acid sequence, 80 residues long: SPI-1 type 3 secretion system needle filament protein (80 aa).

It belongs to the SctF family. As to quaternary structure, the core secretion machinery of the T3SS is composed of approximately 20 different proteins, including cytoplasmic components, a base, an export apparatus and a needle. This subunit polymerizes and forms the helical needle filament. Interacts with the needle tip protein SipD/SctA. Interacts with the needle adapter protein PrgJ/SctI, the secretin InvG/SctC and the minor export apparatus protein SpaP/SctR. In vitro, the needle protomer refolds spontaneously to extend the needle from the distal end.

It is found in the secreted. It localises to the cell surface. Its activity is regulated as follows. Binding of bile salts, including deoxycholate, to the PrgI:SipD interface may inhibit the T3SS function. Functionally, component of the type III secretion system (T3SS), also called injectisome, which is used to inject bacterial effector proteins into eukaryotic host cells. PrgI/SctF1 forms the external needle filament that protrudes from the bacterial surface. Is probably involved in the transduction of an activating signal, thought to be mediated by the distal tip of the needle filament, to the secretion machine. Required for invasion of epithelial cells. Required for the secretion of the effector protein SptP. In terms of biological role, during infection, can induce innate immune responses. The needle proteins interact with host TLR2 or TLR4, and induce signaling by NF-kappa-B and/or AP-1. This activation is MyD88 dependent and results in increased expression of cytokines, including TNF-alpha, IL-6 and IL-8. In Salmonella typhimurium (strain LT2 / SGSC1412 / ATCC 700720), this protein is SPI-1 type 3 secretion system needle filament protein.